The following is a 347-amino-acid chain: NADH-ubiquinone oxidoreductase chain 2 (347 aa).

11 helical membrane-spanning segments follow: residues 3 to 23 (PMIL…VMMS), 25 to 45 (HWFL…PVLM), 59 to 79 (YFLT…INLI), 96 to 116 (TLLT…FWVP), 122 to 142 (VSLN…LSLL), 149 to 169 (VNTN…GWGG), 178 to 198 (IMAY…IYNP), 201 to 221 (SLLN…LLMF), 239 to 259 (IITT…PLSG), 274 to 294 (DSVI…FFYM), and 326 to 346 (MTSL…AMIL).

The protein belongs to the complex I subunit 2 family. As to quaternary structure, core subunit of respiratory chain NADH dehydrogenase (Complex I) which is composed of 45 different subunits. Interacts with TMEM242.

It localises to the mitochondrion inner membrane. It catalyses the reaction a ubiquinone + NADH + 5 H(+)(in) = a ubiquinol + NAD(+) + 4 H(+)(out). Functionally, core subunit of the mitochondrial membrane respiratory chain NADH dehydrogenase (Complex I) which catalyzes electron transfer from NADH through the respiratory chain, using ubiquinone as an electron acceptor. Essential for the catalytic activity and assembly of complex I. The sequence is that of NADH-ubiquinone oxidoreductase chain 2 from Sylvisorex johnstoni (Johnston's forest shrew).